The following is a 310-amino-acid chain: tRNA dimethylallyltransferase (310 aa).

An ATP-binding site is contributed by 9-16 (GPTAVGKT). 11–16 (TAVGKT) is a binding site for substrate. The segment at 34 to 37 (DSMQ) is interaction with substrate tRNA.

This sequence belongs to the IPP transferase family. In terms of assembly, monomer. The cofactor is Mg(2+).

It carries out the reaction adenosine(37) in tRNA + dimethylallyl diphosphate = N(6)-dimethylallyladenosine(37) in tRNA + diphosphate. In terms of biological role, catalyzes the transfer of a dimethylallyl group onto the adenine at position 37 in tRNAs that read codons beginning with uridine, leading to the formation of N6-(dimethylallyl)adenosine (i(6)A). The sequence is that of tRNA dimethylallyltransferase from Syntrophomonas wolfei subsp. wolfei (strain DSM 2245B / Goettingen).